The primary structure comprises 419 residues: UDP-N-acetylmuramoylalanine--D-glutamate ligase (419 aa).

109–115 (GSTGKTT) provides a ligand contact to ATP.

This sequence belongs to the MurCDEF family.

The protein localises to the cytoplasm. It catalyses the reaction UDP-N-acetyl-alpha-D-muramoyl-L-alanine + D-glutamate + ATP = UDP-N-acetyl-alpha-D-muramoyl-L-alanyl-D-glutamate + ADP + phosphate + H(+). The protein operates within cell wall biogenesis; peptidoglycan biosynthesis. In terms of biological role, cell wall formation. Catalyzes the addition of glutamate to the nucleotide precursor UDP-N-acetylmuramoyl-L-alanine (UMA). This is UDP-N-acetylmuramoylalanine--D-glutamate ligase from Chlamydia felis (strain Fe/C-56) (Chlamydophila felis).